Reading from the N-terminus, the 297-residue chain is 2-phospho-L-lactate transferase (297 aa).

Asp49 lines the 7,8-didemethyl-8-hydroxy-5-deazariboflavin pocket.

It belongs to the CofD family. As to quaternary structure, homodimer. Requires Mg(2+) as cofactor.

It catalyses the reaction (2S)-lactyl-2-diphospho-5'-guanosine + 7,8-didemethyl-8-hydroxy-5-deazariboflavin = oxidized coenzyme F420-0 + GMP + H(+). The protein operates within cofactor biosynthesis; coenzyme F420 biosynthesis. Its function is as follows. Catalyzes the transfer of the 2-phospholactate moiety from (2S)-lactyl-2-diphospho-5'-guanosine to 7,8-didemethyl-8-hydroxy-5-deazariboflavin (FO) with the formation of oxidized coenzyme F420-0 and GMP. This chain is 2-phospho-L-lactate transferase, found in Methanospirillum hungatei JF-1 (strain ATCC 27890 / DSM 864 / NBRC 100397 / JF-1).